The following is a 1925-amino-acid chain: Methylcytosine dioxygenase tet3-A (1925 aa).

Residues 62-103 (SNKKRKRCGVCVPCLRKEPCGACYNCVNRSTSHQICKMRKCE) form a CXXC-type zinc finger. The Zn(2+) site is built by Cys69, Cys72, Cys75, Cys81, Cys84, Cys87, Cys97, and Cys102. Disordered stretches follow at residues 457–476 (KNAL…QNKK), 630–685 (KSQK…NAVF), 774–812 (GAKD…QNDL), and 833–892 (DFSL…PISH). Residues 465 to 476 (SPRQTSWEQNKK) are compositionally biased toward polar residues. Positions 665-677 (KPPRKQVQIKKPR) are enriched in basic residues. Residues 777–797 (DSCPTPSTDDASSSSGQGDSA) are compositionally biased toward low complexity. 2 stretches are compositionally biased toward polar residues: residues 841–856 (APSQ…QISG) and 883–892 (PALSNNPISH). The Zn(2+) site is built by Cys982, Cys984, Cys1042, His1068, and Cys1070. Arg1110 lines the 2-oxoglutarate pocket. Positions 1120, 1122, 1138, 1147, and 1207 each coordinate Zn(2+). Cys1223 provides a ligand contact to 2-oxoglutarate. His1229 is a binding site for Zn(2+). Fe cation-binding residues include His1231 and Asp1233. His1265 contributes to the 2-oxoglutarate binding site. 4 disordered regions span residues 1307–1364 (SEPA…QTKP), 1474–1513 (LADG…KSFN), 1556–1600 (SVHS…LPND), and 1722–1769 (NWAS…EEEI). The span at 1316 to 1347 (RQLDAKKAAAEKKKLQKEKLVSPDKTKQEPAD) shows a compositional bias: basic and acidic residues. The span at 1350-1363 (MCQQNPGVPQQQTK) shows a compositional bias: polar residues. Basic and acidic residues predominate over residues 1490–1499 (SYRRSSEVPH). Polar residues-rich tracts occupy residues 1502–1513 (SLQNPNSQKSFN), 1556–1572 (SVHS…QTSD), and 1730–1742 (VGNS…SQNH). A Fe cation-binding site is contributed by His1804. Position 1819 to 1821 (1819 to 1821 (RIS)) interacts with 2-oxoglutarate. Residues 1837–1870 (LALWEAKMKLLAERARVKEEEAARLGIKQEVKSL) adopt a coiled-coil conformation.

It belongs to the TET family. Requires Fe(2+) as cofactor. The cofactor is Zn(2+). As to expression, detected in embryo (at protein level). Detected in embryonic head, in developing brain, neural tube and eye.

It is found in the nucleus. The protein localises to the chromosome. It catalyses the reaction a 5-methyl-2'-deoxycytidine in DNA + 2-oxoglutarate + O2 = a 5-hydroxymethyl-2'-deoxycytidine in DNA + succinate + CO2. It carries out the reaction a 5-hydroxymethyl-2'-deoxycytidine in DNA + 2-oxoglutarate + O2 = a 5-formyl-2'-deoxycytidine in DNA + succinate + CO2 + H2O. The enzyme catalyses a 5-formyl-2'-deoxycytidine in DNA + 2-oxoglutarate + O2 = a 5-carboxyl-2'-deoxycytidine in DNA + succinate + CO2 + H(+). Dioxygenase that catalyzes the conversion of the modified genomic base 5-methylcytosine (5mC) into 5-hydroxymethylcytosine (5hmC) and plays a key role in epigenetic chromatin reprogramming during embryonic development. Conversion of 5mC into 5hmC probably constitutes the first step in cytosine demethylation. Selectively binds to the promoter region of target genes and contributes to regulate the expression of numerous developmental genes, including pax6, rax, sox9 and six3. May also contribute to the regulation of target genes in ways that do not require its enzyme activity. This is Methylcytosine dioxygenase tet3-A from Xenopus laevis (African clawed frog).